Here is a 307-residue protein sequence, read N- to C-terminus: Acetaldehyde dehydrogenase 2 (307 aa).

Cys131 (acyl-thioester intermediate) is an active-site residue. NAD(+) is bound by residues 162–170 (SVGPGTRKN) and Asn273.

The protein belongs to the acetaldehyde dehydrogenase family.

The enzyme catalyses acetaldehyde + NAD(+) + CoA = acetyl-CoA + NADH + H(+). The sequence is that of Acetaldehyde dehydrogenase 2 (aphF) from Comamonas testosteroni (Pseudomonas testosteroni).